Here is an 880-residue protein sequence, read N- to C-terminus: Tyrosine-protein kinase receptor TYRO3 (880 aa).

A signal peptide spans 1–30 (MALRRSMGWPGLRPLLLAGLASLLLPGSAA). 2 Ig-like C2-type domains span residues 31–118 (AGLK…TKIS) and 129–209 (PFFT…PAIV). Over 31–419 (AGLKLMGAPV…QGPPHSRTSW (389 aa)) the chain is Extracellular. N53, N75, N181, N220, N230, N283, N356, and N370 each carry an N-linked (GlcNAc...) asparagine glycan. Cystine bridges form between C54–C107 and C150–C193. Fibronectin type-III domains are found at residues 217–310 (APFN…TKGL) and 315–406 (APQN…SHDH). Residues 420-440 (VPVVLGVLTALITAAALALIL) traverse the membrane as a helical segment. The Cytoplasmic portion of the chain corresponds to 441-880 (LRKRRKETRF…QQGLLPHSSC (440 aa)). Phosphoserine is present on S456. Positions 508-785 (FTLGRMLGKG…LENILGHLSV (278 aa)) constitute a Protein kinase domain. ATP-binding positions include 514–522 (LGKGEFGSV) and K540. Residue D645 is the Proton acceptor of the active site. Phosphotyrosine; by autocatalysis is present on residues Y671, Y675, Y676, and Y794. The interval 800 to 864 (AEQPTESGSP…QQPESPLNEN (65 aa)) is disordered. Residues S808 and S859 each carry the phosphoserine modification. The span at 849 to 864 (SPGQLEQQPESPLNEN) shows a compositional bias: polar residues.

The protein belongs to the protein kinase superfamily. Tyr protein kinase family. AXL/UFO subfamily. Monomer and homodimer. Interacts (via N-terminus) with extracellular ligands TULP1 and GAS6. Interacts with PIK3R1; this interaction increases PI3-kinase activity. In terms of processing, autophosphorylated. Abundant in the brain and lower levels in other tissues.

The protein localises to the cell membrane. The catalysed reaction is L-tyrosyl-[protein] + ATP = O-phospho-L-tyrosyl-[protein] + ADP + H(+). In terms of biological role, receptor tyrosine kinase that transduces signals from the extracellular matrix into the cytoplasm by binding to several ligands including TULP1 or GAS6. Regulates many physiological processes including cell survival, migration and differentiation. Ligand binding at the cell surface induces dimerization and autophosphorylation of TYRO3 on its intracellular domain that provides docking sites for downstream signaling molecules. Following activation by ligand, interacts with PIK3R1 and thereby enhances PI3-kinase activity. Activates the AKT survival pathway, including nuclear translocation of NF-kappa-B and up-regulation of transcription of NF-kappa-B-regulated genes. TYRO3 signaling plays a role in various processes such as neuron protection from excitotoxic injury, platelet aggregation and cytoskeleton reorganization. Also plays an important role in inhibition of Toll-like receptors (TLRs)-mediated innate immune response by activating STAT1, which selectively induces production of suppressors of cytokine signaling SOCS1 and SOCS3. The chain is Tyrosine-protein kinase receptor TYRO3 (Tyro3) from Mus musculus (Mouse).